Here is a 127-residue protein sequence, read N- to C-terminus: Fumarate reductase subunit C (127 aa).

Helical transmembrane passes span 30-50 (ATVL…GSLV), 67-87 (IVVA…QTFF), and 107-127 (IIVL…LIVM).

The protein belongs to the FrdC family. In terms of assembly, part of an enzyme complex containing four subunits: a flavoprotein (FrdA), an iron-sulfur protein (FrdB), and two hydrophobic anchor proteins (FrdC and FrdD).

It localises to the cell inner membrane. Its function is as follows. Anchors the catalytic components of the fumarate reductase complex to the cell membrane, binds quinones. The protein is Fumarate reductase subunit C of Vibrio campbellii (strain ATCC BAA-1116).